Reading from the N-terminus, the 348-residue chain is UPF0283 membrane protein PMI1371 (348 aa).

A run of 2 helical transmembrane segments spans residues 69–89 (LITV…GQWI) and 99–119 (IALG…GSVI).

This sequence belongs to the UPF0283 family.

The protein localises to the cell inner membrane. The protein is UPF0283 membrane protein PMI1371 of Proteus mirabilis (strain HI4320).